We begin with the raw amino-acid sequence, 411 residues long: tRNA pseudouridine synthase Pus10 (411 aa).

Residues 65–192 form the THUMP domain; that stretch reads ALAKCHLPTR…SGQVKVVRNP (128 aa). The active-site Nucleophile is Asp244. Substrate is bound by residues Tyr305 and Tyr376.

Belongs to the pseudouridine synthase Pus10 family.

It catalyses the reaction uridine(54) in tRNA = pseudouridine(54) in tRNA. It carries out the reaction uridine(55) in tRNA = pseudouridine(55) in tRNA. In terms of biological role, responsible for synthesis of pseudouridine from uracil-54 and uracil-55 in the psi GC loop of transfer RNAs. This Pyrobaculum arsenaticum (strain DSM 13514 / JCM 11321 / PZ6) protein is tRNA pseudouridine synthase Pus10.